The sequence spans 117 residues: DNA-directed RNA polymerase subunit omega (117 aa).

Belongs to the RNA polymerase subunit omega family. The RNAP catalytic core consists of 2 alpha, 1 beta, 1 beta' and 1 omega subunit. When a sigma factor is associated with the core the holoenzyme is formed, which can initiate transcription.

It catalyses the reaction RNA(n) + a ribonucleoside 5'-triphosphate = RNA(n+1) + diphosphate. In terms of biological role, promotes RNA polymerase assembly. Latches the N- and C-terminal regions of the beta' subunit thereby facilitating its interaction with the beta and alpha subunits. This Roseobacter denitrificans (strain ATCC 33942 / OCh 114) (Erythrobacter sp. (strain OCh 114)) protein is DNA-directed RNA polymerase subunit omega.